A 295-amino-acid polypeptide reads, in one-letter code: ATP synthase subunit a (295 aa).

The next 7 membrane-spanning stretches (helical) occupy residues 41–61 (KWSA…WLGF), 101–121 (YLTI…IPVA), 129–149 (IALP…VGIR), 161–181 (LVPA…IEFV), 191–211 (LAIR…VFAL), 222–242 (FVFG…ELMI), and 244–264 (VLQA…AISS).

It belongs to the ATPase A chain family. As to quaternary structure, F-type ATPases have 2 components, CF(1) - the catalytic core - and CF(0) - the membrane proton channel. CF(1) has five subunits: alpha(3), beta(3), gamma(1), delta(1), epsilon(1). CF(0) has three main subunits: a(1), b(2) and c(9-12). The alpha and beta chains form an alternating ring which encloses part of the gamma chain. CF(1) is attached to CF(0) by a central stalk formed by the gamma and epsilon chains, while a peripheral stalk is formed by the delta and b chains.

It localises to the cell membrane. Key component of the proton channel; it plays a direct role in the translocation of protons across the membrane. This is ATP synthase subunit a from Parafrankia sp. (strain EAN1pec).